The chain runs to 517 residues: Cytochrome P450 1A1 (517 aa).

A mitochondrial targeting signal region spans residues Trp34–Pro45. O-linked (GlcNAc) serine glycosylation is present at Ser72. Residue Phe229 participates in substrate binding. Position 462 (Cys462) interacts with heme.

It belongs to the cytochrome P450 family. In terms of assembly, interacts with cytosolic chaperones HSP70 and HSP90; this interaction is required for initial targeting to mitochondria. Interacts (via mitochondrial targeting signal) with TOMM40 (via N-terminus); this interaction is required for translocation across the mitochondrial outer membrane. It depends on heme as a cofactor.

The protein localises to the endoplasmic reticulum membrane. The protein resides in the mitochondrion inner membrane. Its subcellular location is the microsome membrane. It is found in the cytoplasm. It carries out the reaction an organic molecule + reduced [NADPH--hemoprotein reductase] + O2 = an alcohol + oxidized [NADPH--hemoprotein reductase] + H2O + H(+). It catalyses the reaction estrone + reduced [NADPH--hemoprotein reductase] + O2 = 2-hydroxyestrone + oxidized [NADPH--hemoprotein reductase] + H2O + H(+). The enzyme catalyses estrone + reduced [NADPH--hemoprotein reductase] + O2 = 4-hydroxyestrone + oxidized [NADPH--hemoprotein reductase] + H2O + H(+). The catalysed reaction is estrone + reduced [NADPH--hemoprotein reductase] + O2 = 6alpha-hydroxyestrone + oxidized [NADPH--hemoprotein reductase] + H2O + H(+). It carries out the reaction estrone + reduced [NADPH--hemoprotein reductase] + O2 = 15alpha-hydroxyestrone + oxidized [NADPH--hemoprotein reductase] + H2O + H(+). It catalyses the reaction estrone + reduced [NADPH--hemoprotein reductase] + O2 = 16alpha-hydroxyestrone + oxidized [NADPH--hemoprotein reductase] + H2O + H(+). The enzyme catalyses 17beta-estradiol + reduced [NADPH--hemoprotein reductase] + O2 = 2-hydroxy-17beta-estradiol + oxidized [NADPH--hemoprotein reductase] + H2O + H(+). The catalysed reaction is 17beta-estradiol + reduced [NADPH--hemoprotein reductase] + O2 = 4-hydroxy-17beta-estradiol + oxidized [NADPH--hemoprotein reductase] + H2O + H(+). It carries out the reaction 17beta-estradiol + reduced [NADPH--hemoprotein reductase] + O2 = 6alpha-hydroxy-17beta-estradiol + oxidized [NADPH--hemoprotein reductase] + H2O + H(+). It catalyses the reaction 17beta-estradiol + reduced [NADPH--hemoprotein reductase] + O2 = 7alpha-hydroxy-17beta-estradiol + oxidized [NADPH--hemoprotein reductase] + H2O + H(+). The enzyme catalyses 17beta-estradiol + reduced [NADPH--hemoprotein reductase] + O2 = 15alpha-hydroxy-17beta-estradiol + oxidized [NADPH--hemoprotein reductase] + H2O + H(+). The catalysed reaction is (5Z,8Z,11Z)-eicosatrienoate + reduced [NADPH--hemoprotein reductase] + O2 = 19-hydroxy-(5Z,8Z,11Z)-eicosatrienoate + oxidized [NADPH--hemoprotein reductase] + H2O + H(+). It carries out the reaction (5Z,8Z,11Z,14Z)-eicosatetraenoate + reduced [NADPH--hemoprotein reductase] + O2 = 16-hydroxy-(5Z,8Z,11Z,14Z)-eicosatetraenoate + oxidized [NADPH--hemoprotein reductase] + H2O + H(+). It catalyses the reaction (5Z,8Z,11Z,14Z)-eicosatetraenoate + reduced [NADPH--hemoprotein reductase] + O2 = 17-hydroxy-(5Z,8Z,11Z,14Z)-eicosatetraenoate + oxidized [NADPH--hemoprotein reductase] + H2O + H(+). The enzyme catalyses (5Z,8Z,11Z,14Z)-eicosatetraenoate + reduced [NADPH--hemoprotein reductase] + O2 = 18-hydroxy-(5Z,8Z,11Z,14Z)-eicosatetraenoate + oxidized [NADPH--hemoprotein reductase] + H2O + H(+). The catalysed reaction is (5Z,8Z,11Z,14Z)-eicosatetraenoate + reduced [NADPH--hemoprotein reductase] + O2 = 19-hydroxy-(5Z,8Z,11Z,14Z)-eicosatetraenoate + oxidized [NADPH--hemoprotein reductase] + H2O + H(+). It carries out the reaction (5Z,8Z,11Z,14Z,17Z)-eicosapentaenoate + reduced [NADPH--hemoprotein reductase] + O2 = 19-hydroxy-(5Z,8Z,11Z,14Z,17Z)-eicosapentaenoate + oxidized [NADPH--hemoprotein reductase] + H2O + H(+). It catalyses the reaction (5Z,8Z,11Z,14Z)-eicosatetraenoate + reduced [NADPH--hemoprotein reductase] + O2 = (8R,9S)-epoxy-(5Z,11Z,14Z)-eicosatrienoate + oxidized [NADPH--hemoprotein reductase] + H2O + H(+). The enzyme catalyses (5Z,8Z,11Z,14Z)-eicosatetraenoate + reduced [NADPH--hemoprotein reductase] + O2 = (11R,12S)-epoxy-(5Z,8Z,14Z)-eicosatrienoate + oxidized [NADPH--hemoprotein reductase] + H2O + H(+). The catalysed reaction is (5Z,8Z,11Z,14Z)-eicosatetraenoate + reduced [NADPH--hemoprotein reductase] + O2 = (14S,15R)-epoxy-(5Z,8Z,11Z)-eicosatrienoate + oxidized [NADPH--hemoprotein reductase] + H2O + H(+). It carries out the reaction (5Z,8Z,11Z,14Z)-eicosatetraenoate + reduced [NADPH--hemoprotein reductase] + O2 = (14R,15S)-epoxy-(5Z,8Z,11Z)-eicosatrienoate + oxidized [NADPH--hemoprotein reductase] + H2O + H(+). It catalyses the reaction (5Z,8Z,11Z,14Z,17Z)-eicosapentaenoate + reduced [NADPH--hemoprotein reductase] + O2 = (17R,18S)-epoxy-(5Z,8Z,11Z,14Z)-eicosatetraenoate + oxidized [NADPH--hemoprotein reductase] + H2O + H(+). The enzyme catalyses (4Z,7Z,10Z,13Z,16Z,19Z)-docosahexaenoate + reduced [NADPH--hemoprotein reductase] + O2 = (19S,20R)-epoxy-(4Z,7Z,10Z,13Z,16Z)-docosapentaenoate + oxidized [NADPH--hemoprotein reductase] + H2O + H(+). The catalysed reaction is (4Z,7Z,10Z,13Z,16Z,19Z)-docosahexaenoate + reduced [NADPH--hemoprotein reductase] + O2 = (19R,20S)-epoxy-(4Z,7Z,10Z,13Z,16Z)-docosapentaenoate + oxidized [NADPH--hemoprotein reductase] + H2O + H(+). It carries out the reaction all-trans-retinol + reduced [NADPH--hemoprotein reductase] + O2 = all-trans-retinal + oxidized [NADPH--hemoprotein reductase] + 2 H2O + H(+). It catalyses the reaction all-trans-retinal + reduced [NADPH--hemoprotein reductase] + O2 = all-trans-retinoate + oxidized [NADPH--hemoprotein reductase] + H2O + 2 H(+). The enzyme catalyses (13S)-hydroperoxy-(9Z,11E)-octadecadienoate = 13-oxo-(9Z,11E)-octadecadienoate + H2O. The catalysed reaction is (12S)-hydroperoxy-(5Z,8Z,10E,14Z)-eicosatetraenoate = 12-oxo-(5Z,8Z,10E,14Z)-eicosatetraenoate + H2O. It carries out the reaction (15S)-hydroperoxy-(5Z,8Z,11Z,13E)-eicosatetraenoate = 15-oxo-(5Z,8Z,11Z,13E)-eicosatetraenoate + H2O. It catalyses the reaction (5S)-hydroperoxy-(6E,8Z,11Z,14Z)-eicosatetraenoate = 5-oxo-(6E,8Z,11Z,14Z)-eicosatetraenoate + H2O. It functions in the pathway steroid hormone biosynthesis. The protein operates within lipid metabolism; fatty acid metabolism. Its pathway is cofactor metabolism; retinol metabolism. A cytochrome P450 monooxygenase involved in the metabolism of various endogenous substrates, including fatty acids, steroid hormones and vitamins. Mechanistically, uses molecular oxygen inserting one oxygen atom into a substrate, and reducing the second into a water molecule, with two electrons provided by NADPH via cytochrome P450 reductase (CPR; NADPH-ferrihemoprotein reductase). Catalyzes the hydroxylation of carbon-hydrogen bonds. Exhibits high catalytic activity for the formation of hydroxyestrogens from estrone (E1) and 17beta-estradiol (E2), namely 2-hydroxy E1 and E2, as well as D-ring hydroxylated E1 and E2 at the C15alpha and C16alpha positions. Displays different regioselectivities for polyunsaturated fatty acids (PUFA) hydroxylation. Catalyzes the epoxidation of double bonds of certain PUFA. Converts arachidonic acid toward epoxyeicosatrienoic acid (EET) regioisomers, 8,9-, 11,12-, and 14,15-EET, that function as lipid mediators in the vascular system. Displays an absolute stereoselectivity in the epoxidation of eicosapentaenoic acid (EPA) producing the 17(R),18(S) enantiomer. May play an important role in all-trans retinoic acid biosynthesis in extrahepatic tissues. Catalyzes two successive oxidative transformation of all-trans retinol to all-trans retinal and then to the active form all-trans retinoic acid. May also participate in eicosanoids metabolism by converting hydroperoxide species into oxo metabolites (lipoxygenase-like reaction, NADPH-independent). This Felis catus (Cat) protein is Cytochrome P450 1A1 (CYP1A1).